The sequence spans 101 residues: Large ribosomal subunit protein uL24 (101 aa).

Belongs to the universal ribosomal protein uL24 family. In terms of assembly, part of the 50S ribosomal subunit.

Functionally, one of two assembly initiator proteins, it binds directly to the 5'-end of the 23S rRNA, where it nucleates assembly of the 50S subunit. One of the proteins that surrounds the polypeptide exit tunnel on the outside of the subunit. This Lactococcus lactis subsp. lactis (strain IL1403) (Streptococcus lactis) protein is Large ribosomal subunit protein uL24.